The following is a 393-amino-acid chain: Pre-mRNA-splicing regulator WTAP (393 aa).

The segment at 242-393 (QIQISGNRTP…SSVNVQGSVL (152 aa)) is disordered. The segment covering 254–267 (EPKDEGETSGKDCG) has biased composition (basic and acidic residues). Polar residues-rich tracts occupy residues 272-286 (GPSN…THSS) and 321-353 (DGSS…SNDT). The span at 354–365 (DSNHDSQEEKPV) shows a compositional bias: basic and acidic residues. Polar residues predominate over residues 369 to 393 (GNRTVSSRHLQNGLDSSVNVQGSVL).

The protein belongs to the fl(2)d family. In terms of assembly, component of the WMM complex, a N6-methyltransferase complex composed of a catalytic subcomplex, named MAC, and of an associated subcomplex, named MACOM. Component of the MACOM subcomplex.

It is found in the nucleus speckle. Its subcellular location is the nucleus. It localises to the nucleoplasm. Functionally, associated component of the WMM complex, a complex that mediates N6-methyladenosine (m6A) methylation of RNAs, a modification that plays a role in the efficiency of mRNA splicing and RNA processing. This is Pre-mRNA-splicing regulator WTAP from Xenopus laevis (African clawed frog).